A 63-amino-acid polypeptide reads, in one-letter code: Large ribosomal subunit protein uL29 (63 aa).

The protein belongs to the universal ribosomal protein uL29 family.

In Baumannia cicadellinicola subsp. Homalodisca coagulata, this protein is Large ribosomal subunit protein uL29.